The primary structure comprises 160 residues: MRLLILAVGKLKQGPERELAERYRARFDDLGRKLGFRGLDVHEIAESRAREAPARMAEEAAAIIAQVPDGAVLVTLDERGQSLGSTAFAAQLGRWRDEQVPGTIFVIGGADGLLPELRRKAKLSMSFGGATWPHQMVRVMLLEQIYRAATILAGHPYHRA.

Leu-76 and Gly-108 together coordinate S-adenosyl-L-methionine.

Belongs to the RNA methyltransferase RlmH family. Homodimer.

It localises to the cytoplasm. The catalysed reaction is pseudouridine(1915) in 23S rRNA + S-adenosyl-L-methionine = N(3)-methylpseudouridine(1915) in 23S rRNA + S-adenosyl-L-homocysteine + H(+). Its function is as follows. Specifically methylates the pseudouridine at position 1915 (m3Psi1915) in 23S rRNA. The protein is Ribosomal RNA large subunit methyltransferase H of Rhodopseudomonas palustris (strain ATCC BAA-98 / CGA009).